The primary structure comprises 616 residues: Dihydroxy-acid dehydratase (616 aa).

Aspartate 81 lines the Mg(2+) pocket. Residue cysteine 122 coordinates [2Fe-2S] cluster. Positions 123 and 124 each coordinate Mg(2+). At lysine 124 the chain carries N6-carboxylysine. Residue cysteine 195 coordinates [2Fe-2S] cluster. Position 491 (glutamate 491) interacts with Mg(2+). The Proton acceptor role is filled by serine 517.

This sequence belongs to the IlvD/Edd family. As to quaternary structure, homodimer. Requires [2Fe-2S] cluster as cofactor. Mg(2+) serves as cofactor.

The enzyme catalyses (2R)-2,3-dihydroxy-3-methylbutanoate = 3-methyl-2-oxobutanoate + H2O. It carries out the reaction (2R,3R)-2,3-dihydroxy-3-methylpentanoate = (S)-3-methyl-2-oxopentanoate + H2O. The protein operates within amino-acid biosynthesis; L-isoleucine biosynthesis; L-isoleucine from 2-oxobutanoate: step 3/4. Its pathway is amino-acid biosynthesis; L-valine biosynthesis; L-valine from pyruvate: step 3/4. Functions in the biosynthesis of branched-chain amino acids. Catalyzes the dehydration of (2R,3R)-2,3-dihydroxy-3-methylpentanoate (2,3-dihydroxy-3-methylvalerate) into 2-oxo-3-methylpentanoate (2-oxo-3-methylvalerate) and of (2R)-2,3-dihydroxy-3-methylbutanoate (2,3-dihydroxyisovalerate) into 2-oxo-3-methylbutanoate (2-oxoisovalerate), the penultimate precursor to L-isoleucine and L-valine, respectively. The polypeptide is Dihydroxy-acid dehydratase (Methylocella silvestris (strain DSM 15510 / CIP 108128 / LMG 27833 / NCIMB 13906 / BL2)).